Consider the following 337-residue polypeptide: Cytoskeleton protein RodZ (337 aa).

Over 1–111 (MNTEATHDQN…LGKRRKKRDG (111 aa)) the chain is Cytoplasmic. The HTH cro/C1-type domain maps to 19–71 (LRNAREQLGLSQQAVAERLCLKVSTVRDIEEDKAPADLASTFLRGYIRSYARL). Residues 30–49 (QQAVAERLCLKVSTVRDIEE) constitute a DNA-binding region (H-T-H motif). Residues 112–132 (WLMTFTWLVLFVVIGLSGAWW) traverse the membrane as a helical; Signal-anchor for type II membrane protein segment. Residues 133 to 337 (WQDHKAQQEE…TLNAEQSPAQ (205 aa)) lie on the Periplasmic side of the membrane. Residues 145–167 (TMADQSSAELSSNSEQGQSVPLN) show a composition bias toward polar residues. A disordered region spans residues 145-236 (TMADQSSAEL…TAATTPDGAA (92 aa)). Residues 168–207 (TSTTTDPATTSTPPASVDTTATNTQTPAVTAPAPAVDPQQ) show a composition bias toward low complexity. The segment covering 208–218 (NAVVSPSQANV) has biased composition (polar residues). The span at 219–236 (DTAATPAPTAATTPDGAA) shows a compositional bias: low complexity.

It belongs to the RodZ family.

It is found in the cell inner membrane. Its function is as follows. Cytoskeletal protein that is involved in cell-shape control through regulation of the length of the long axis. The polypeptide is Cytoskeleton protein RodZ (Escherichia coli O9:H4 (strain HS)).